The sequence spans 486 residues: Aspartyl/glutamyl-tRNA(Asn/Gln) amidotransferase subunit B (486 aa).

This sequence belongs to the GatB/GatE family. GatB subfamily. Heterotrimer of A, B and C subunits.

The enzyme catalyses L-glutamyl-tRNA(Gln) + L-glutamine + ATP + H2O = L-glutaminyl-tRNA(Gln) + L-glutamate + ADP + phosphate + H(+). The catalysed reaction is L-aspartyl-tRNA(Asn) + L-glutamine + ATP + H2O = L-asparaginyl-tRNA(Asn) + L-glutamate + ADP + phosphate + 2 H(+). Functionally, allows the formation of correctly charged Asn-tRNA(Asn) or Gln-tRNA(Gln) through the transamidation of misacylated Asp-tRNA(Asn) or Glu-tRNA(Gln) in organisms which lack either or both of asparaginyl-tRNA or glutaminyl-tRNA synthetases. The reaction takes place in the presence of glutamine and ATP through an activated phospho-Asp-tRNA(Asn) or phospho-Glu-tRNA(Gln). This Herminiimonas arsenicoxydans protein is Aspartyl/glutamyl-tRNA(Asn/Gln) amidotransferase subunit B.